The chain runs to 397 residues: uncharacterized protein (397 aa).

The next 4 helical transmembrane spans lie at 62 to 79 (VLLFGILIFSIFVALIAI), 92 to 109 (WYGLLAFGVLTSLELVVT), 135 to 154 (VVFLPLICVYSLSILYSTLS), and 167 to 189 (AFLKTMLFTLLICSFILNFFPGI).

It localises to the cell membrane. This is an uncharacterized protein from Archaeoglobus fulgidus (strain ATCC 49558 / DSM 4304 / JCM 9628 / NBRC 100126 / VC-16).